A 275-amino-acid polypeptide reads, in one-letter code: Transmembrane protein 45B (275 aa).

Helical transmembrane passes span 7–27 (HALP…KYPL), 47–67 (IVEA…EQFV), 94–114 (LFFA…HVPL), 116–136 (VDRL…YYHV), 146–166 (IHSL…LEVI), 180–200 (LIIL…PPFG), and 212–232 (LMFI…IVAV). Residues S270 and S272 each carry the phosphoserine modification.

The protein belongs to the TMEM45 family. As to quaternary structure, (Microbial infection) Interacts with sindbis virus nsP1 and nsP4; these interactions lead to viral RNA replication inhibition. (Microbial infection) Interacts with chikungunya virus nsP1 and nsP4; these interactions lead to viral RNA replication inhibition.

It is found in the endosome membrane. It localises to the lysosome membrane. The protein resides in the golgi apparatus. Its subcellular location is the trans-Golgi network membrane. Its function is as follows. Plays a role in innate immunity. Mechanistically, promotes alphaviruses RNA degradation by interacting with the viral polymerase nsP4 and the mRNA-capping enzyme nsP1 and thereby interfering with the interaction between viral RNA and nsP1. The protein is Transmembrane protein 45B (TMEM45B) of Homo sapiens (Human).